Consider the following 207-residue polypeptide: Outer-membrane lipoprotein LolB (207 aa).

An N-terminal signal peptide occupies residues 1-21 (MPTKTVRCLRLLPLASLLLAA). A lipid anchor (N-palmitoyl cysteine) is attached at Cys-22. The S-diacylglycerol cysteine moiety is linked to residue Cys-22.

The protein belongs to the LolB family. In terms of assembly, monomer.

It localises to the cell outer membrane. In terms of biological role, plays a critical role in the incorporation of lipoproteins in the outer membrane after they are released by the LolA protein. This is Outer-membrane lipoprotein LolB from Pectobacterium atrosepticum (strain SCRI 1043 / ATCC BAA-672) (Erwinia carotovora subsp. atroseptica).